The following is a 329-amino-acid chain: Probable aryl-alcohol dehydrogenase AAD4 (329 aa).

Tyr-30 serves as the catalytic Proton donor. His-105 provides a ligand contact to substrate. 190–200 (DVMGGGRFQSK) provides a ligand contact to NADP(+).

This sequence belongs to the aldo/keto reductase family. Aldo/keto reductase 2 subfamily.

This Saccharomyces cerevisiae (strain ATCC 204508 / S288c) (Baker's yeast) protein is Probable aryl-alcohol dehydrogenase AAD4 (AAD4).